We begin with the raw amino-acid sequence, 208 residues long: Ribosomal RNA large subunit methyltransferase E (208 aa).

The S-adenosyl-L-methionine site is built by glycine 62, tryptophan 64, aspartate 82, aspartate 98, and aspartate 123. Lysine 163 (proton acceptor) is an active-site residue.

The protein belongs to the class I-like SAM-binding methyltransferase superfamily. RNA methyltransferase RlmE family.

Its subcellular location is the cytoplasm. The catalysed reaction is uridine(2552) in 23S rRNA + S-adenosyl-L-methionine = 2'-O-methyluridine(2552) in 23S rRNA + S-adenosyl-L-homocysteine + H(+). Its function is as follows. Specifically methylates the uridine in position 2552 of 23S rRNA at the 2'-O position of the ribose in the fully assembled 50S ribosomal subunit. This Mannheimia succiniciproducens (strain KCTC 0769BP / MBEL55E) protein is Ribosomal RNA large subunit methyltransferase E.